A 584-amino-acid polypeptide reads, in one-letter code: 65 kDa protein (584 aa).

The region spanning 459 to 548 (YDLYIAESAI…TKKVENWLPP (90 aa)) is the Toprim domain.

In Zymomonas mobilis subsp. mobilis (strain ATCC 10988 / DSM 424 / LMG 404 / NCIMB 8938 / NRRL B-806 / ZM1), this protein is 65 kDa protein.